Reading from the N-terminus, the 120-residue chain is Aspartate 1-decarboxylase (120 aa).

The active-site Schiff-base intermediate with substrate; via pyruvic acid is serine 25. Serine 25 carries the pyruvic acid (Ser) modification. Residue threonine 57 participates in substrate binding. Catalysis depends on tyrosine 58, which acts as the Proton donor. 73–75 (GAA) is a binding site for substrate.

This sequence belongs to the PanD family. Heterooctamer of four alpha and four beta subunits. Pyruvate serves as cofactor. Is synthesized initially as an inactive proenzyme, which is activated by self-cleavage at a specific serine bond to produce a beta-subunit with a hydroxyl group at its C-terminus and an alpha-subunit with a pyruvoyl group at its N-terminus.

The protein localises to the cytoplasm. The catalysed reaction is L-aspartate + H(+) = beta-alanine + CO2. The protein operates within cofactor biosynthesis; (R)-pantothenate biosynthesis; beta-alanine from L-aspartate: step 1/1. Catalyzes the pyruvoyl-dependent decarboxylation of aspartate to produce beta-alanine. The protein is Aspartate 1-decarboxylase of Ralstonia pickettii (strain 12J).